A 398-amino-acid polypeptide reads, in one-letter code: Alpha-ketoglutarate-dependent dioxygenase bsc9 (398 aa).

Residues histidine 167 and aspartate 169 each coordinate Fe cation. Threonine 212 provides a ligand contact to 2-oxoglutarate. Residue histidine 365 coordinates Fe cation. 2-oxoglutarate is bound at residue arginine 377.

Belongs to the TfdA dioxygenase family. The cofactor is Fe(2+).

It participates in mycotoxin biosynthesis. Functionally, alpha-ketoglutarate dependent dioxygenase; part of the gene cluster that mediates the biosynthesis of the diterpene glucoside brassicicene C. In the first step of the brassicicene C biosynthesis, the bifunctional diterpene synthase bsc8 that possesses both prenyl transferase and terpene cyclase activity, converts isopentenyl diphosphate and dimethylallyl diphosphate into geranylgeranyl diphosphate (GGDP) that is further converted into fusicocca-2,10(14)-diene, the first precursor for brassicicene C. Fusicocca-2,10(14)-diene is then substrate of cytochrome P450 monooxygenase bsc1 for hydroxylation at the C-8 position. Oxidation at C-16 position to aldehyde is then catalyzed by the cytochrome P450 monooyxygenase bsc7, yielding fusicocca-2,10(14)-diene-8-beta,16-diol. Follows the isomerization of the double bond and reduction of aldehyde to alcohol catalyzed by the short-chain dehydrogenase/reductase bsc3 to yield the diol compound fusicocca-1,10(14)-diene-8 beta,16-diol. The next step is the oxidation at the C-3 position of fusicocca-2,10(14)-diene-8-beta,16-diol catalyzed by the alpha-ketoglutarate dependent dioxygenase bsc9, to produce a triol compound. Methylation of the hydroxy group at position 16 is performed by the methyltransferase bsc6. 16-O-methylation is followed by oxidation at the C-13 position to ketone and an alkyl shift of the methyl group leads to brassicicene C. Although the probable acetyltransferase bsc4 is included in the gene cluster, no acetylation reactions are necessary for brassicicene C biosynthesis. However, the fact that brassicicene E, which is a structurally related compound having an acetoxy group at position 12, was previously isolated from another strain of A.brassicicola suggests that the ATCC 96836 strain might also produce a small amount of brassicicene E. This chain is Alpha-ketoglutarate-dependent dioxygenase bsc9, found in Alternaria brassicicola (Dark leaf spot agent).